Here is a 548-residue protein sequence, read N- to C-terminus: MFS-rype transporter paaT (548 aa).

The segment covering 1–10 (MEAPRSDQAH) has biased composition (basic and acidic residues). Residues 1 to 32 (MEAPRSDQAHTDATTPMEAIRTTSLGTNNYGP) are disordered. The span at 21-30 (RTTSLGTNNY) shows a compositional bias: polar residues. Residues N70 and N93 are each glycosylated (N-linked (GlcNAc...) asparagine). 12 helical membrane passes run 100-120 (WYCT…SSVI), 139-159 (LVVI…FAPM), 174-194 (ALAV…TLIV), 197-217 (LIDG…LADL), 224-244 (GVPM…GPLV), 256-276 (WLYW…TFTV), 332-352 (IVLF…MFFV), 370-390 (GLMF…APFV), 411-431 (LIPM…FAWT), 436-456 (LHWM…ILLY), 471-493 (AASA…VLFT), and 505-525 (ASTL…VFYF). The short motif at 258-269 (YWIQLILAFVAW) is the Peroxisomal targeting signal element.

The protein belongs to the major facilitator superfamily. DHA1 family. Polyamines/proton antiporter (TC 2.A.1.2.16) subfamily.

Its subcellular location is the peroxisome membrane. Functionally, MFS-type transporter involved in penicillin production, most likely through the translocation of side-chain precursors (phenylacetic acid and phenoxyacetic acid) from the cytosol to the peroxisomal lumen across the peroxisomal membrane. This chain is MFS-rype transporter paaT, found in Penicillium rubens (strain ATCC 28089 / DSM 1075 / NRRL 1951 / Wisconsin 54-1255) (Penicillium chrysogenum).